A 247-amino-acid chain; its full sequence is Coproheme decarboxylase (247 aa).

Residues Arg129, 143-147 (YPMDK), His170, Gln183, and Ser221 each bind Fe-coproporphyrin III. The active site involves Tyr143.

This sequence belongs to the ChdC family. Type 1 subfamily. Fe-coproporphyrin III is required as a cofactor.

The enzyme catalyses Fe-coproporphyrin III + 2 H2O2 + 2 H(+) = heme b + 2 CO2 + 4 H2O. The catalysed reaction is Fe-coproporphyrin III + H2O2 + H(+) = harderoheme III + CO2 + 2 H2O. It catalyses the reaction harderoheme III + H2O2 + H(+) = heme b + CO2 + 2 H2O. It functions in the pathway porphyrin-containing compound metabolism; protoheme biosynthesis. Functionally, involved in coproporphyrin-dependent heme b biosynthesis. Catalyzes the decarboxylation of Fe-coproporphyrin III (coproheme) to heme b (protoheme IX), the last step of the pathway. The reaction occurs in a stepwise manner with a three-propionate intermediate. This is Coproheme decarboxylase from Bacillus cytotoxicus (strain DSM 22905 / CIP 110041 / 391-98 / NVH 391-98).